The chain runs to 178 residues: uncharacterized protein (178 aa).

This is an uncharacterized protein from Bacillus subtilis (strain 168).